The sequence spans 171 residues: MSEGSSITGVQTPGSPKDVRARDLDDIDRRILLALHDDARIPNSALAEMVGIAPSTCHGRVRRLQEIGVIRGFYTDIDPAAVGLGLQAMISVSLQSNARGKIRSFIAHIRTRPQVMDVYFLAGGDDFILHVAARDTEDLRKFVVENLNADSDVAGTQTSLIFEHLRGASPL.

Residues 1–14 (MSEGSSITGVQTPG) are compositionally biased toward polar residues. The segment at 1–21 (MSEGSSITGVQTPGSPKDVRA) is disordered. An HTH asnC-type domain is found at 24–85 (LDDIDRRILL…DIDPAAVGLG (62 aa)). A DNA-binding region (H-T-H motif) is located at residues 43-62 (NSALAEMVGIAPSTCHGRVR).

As to quaternary structure, homodimer in the absence of L-alanine. Homooctamer in the presence of L-alanine. Homotetramers in the presence of L-cysteine.

With respect to regulation, in the presence of alanine, AldR changes its quaternary structure from a homodimer to an octamer with an open-ring conformation. The binding affinity of AldR for the ald control region is increased significantly by L-alanine. In vitro, L-cysteine also increases the binding affinity of AldR for the target DNA. Its function is as follows. Transcriptional regulator that might play a role under hypoxic conditions. Regulates the expression of ald, which encodes L-alanine dehydrogenase. Serves as both an activator for ald expression in the presence of L-alanine and a repressor in the absence of L-alanine. Acts by binding directly to the upstream region of the ald gene. Four AldR-binding sites (O2, O1, O4 and O3) were identified upstream of the ald gene. O2, O1 and O4 are required for the induction of ald expression by alanine, while O3 is directly involved in the repression of ald expression, by occluding the access of RNA polymerase to the ald promoter. In addition to O3, both O1 and O4 are also necessary for full repression of ald expression in the absence of alanine. This chain is HTH-type transcriptional regulator AldR, found in Mycolicibacterium smegmatis (strain ATCC 700084 / mc(2)155) (Mycobacterium smegmatis).